Here is a 396-residue protein sequence, read N- to C-terminus: uncharacterized protein (396 aa).

Belongs to the mycobacterial PPE family.

This is an uncharacterized protein from Mycobacterium tuberculosis (strain ATCC 25618 / H37Rv).